A 236-amino-acid polypeptide reads, in one-letter code: tRNA1(Val) (adenine(37)-N6)-methyltransferase (236 aa).

Belongs to the methyltransferase superfamily. tRNA (adenine-N(6)-)-methyltransferase family.

The protein resides in the cytoplasm. It carries out the reaction adenosine(37) in tRNA1(Val) + S-adenosyl-L-methionine = N(6)-methyladenosine(37) in tRNA1(Val) + S-adenosyl-L-homocysteine + H(+). In terms of biological role, specifically methylates the adenine in position 37 of tRNA(1)(Val) (anticodon cmo5UAC). This is tRNA1(Val) (adenine(37)-N6)-methyltransferase from Actinobacillus pleuropneumoniae serotype 7 (strain AP76).